The chain runs to 150 residues: Large ribosomal subunit protein bL9 (150 aa).

It belongs to the bacterial ribosomal protein bL9 family.

Binds to the 23S rRNA. In Shewanella denitrificans (strain OS217 / ATCC BAA-1090 / DSM 15013), this protein is Large ribosomal subunit protein bL9.